Consider the following 392-residue polypeptide: Bifunctional enzyme IspD/IspF (392 aa).

2 2-C-methyl-D-erythritol 4-phosphate cytidylyltransferase regions span residues 1-234 (MTES…MMRT) and 1-235 (MTES…MRTA). The interval 235 to 392 (AVGMGYDVHR…AVATIQLPET (158 aa)) is 2-C-methyl-D-erythritol 2,4-cyclodiphosphate synthase. A divalent metal cation is bound by residues D241 and H243. 4-CDP-2-C-methyl-D-erythritol 2-phosphate-binding positions include 241-243 (DVH) and 267-268 (HS). H275 contributes to the a divalent metal cation binding site. Residues 289-291 (DIG), 365-368 (TTTE), F372, and R375 contribute to the 4-CDP-2-C-methyl-D-erythritol 2-phosphate site.

The protein in the N-terminal section; belongs to the IspD/TarI cytidylyltransferase family. IspD subfamily. In the C-terminal section; belongs to the IspF family. A divalent metal cation is required as a cofactor.

The catalysed reaction is 2-C-methyl-D-erythritol 4-phosphate + CTP + H(+) = 4-CDP-2-C-methyl-D-erythritol + diphosphate. The enzyme catalyses 4-CDP-2-C-methyl-D-erythritol 2-phosphate = 2-C-methyl-D-erythritol 2,4-cyclic diphosphate + CMP. It participates in isoprenoid biosynthesis; isopentenyl diphosphate biosynthesis via DXP pathway; isopentenyl diphosphate from 1-deoxy-D-xylulose 5-phosphate: step 2/6. Its pathway is isoprenoid biosynthesis; isopentenyl diphosphate biosynthesis via DXP pathway; isopentenyl diphosphate from 1-deoxy-D-xylulose 5-phosphate: step 4/6. Its function is as follows. Bifunctional enzyme that catalyzes the formation of 4-diphosphocytidyl-2-C-methyl-D-erythritol from CTP and 2-C-methyl-D-erythritol 4-phosphate (MEP) (IspD), and catalyzes the conversion of 4-diphosphocytidyl-2-C-methyl-D-erythritol 2-phosphate (CDP-ME2P) to 2-C-methyl-D-erythritol 2,4-cyclodiphosphate (ME-CPP) with a corresponding release of cytidine 5-monophosphate (CMP) (IspF). This chain is Bifunctional enzyme IspD/IspF, found in Sphingopyxis alaskensis (strain DSM 13593 / LMG 18877 / RB2256) (Sphingomonas alaskensis).